A 222-amino-acid chain; its full sequence is L-serine dehydratase, beta chain (222 aa).

One can recognise an ACT domain in the interval 150-222 (TILLEYPEQR…RFTTAKYVEV (73 aa)).

It belongs to the iron-sulfur dependent L-serine dehydratase family. Heterooctamer of four alpha chains and four beta chains. It depends on [4Fe-4S] cluster as a cofactor.

It carries out the reaction L-serine = pyruvate + NH4(+). The protein operates within carbohydrate biosynthesis; gluconeogenesis. The sequence is that of L-serine dehydratase, beta chain (sdhB) from Peptoniphilus asaccharolyticus (Peptostreptococcus asaccharolyticus).